Here is a 295-residue protein sequence, read N- to C-terminus: Undecaprenyl-diphosphatase (295 aa).

6 helical membrane-spanning segments follow: residues 39-59 (PGAA…LLYF), 97-117 (WYII…QHAI), 121-141 (LRNL…LWIV), 198-218 (AFLM…VKAI), 232-252 (ATIA…IGFL), and 263-283 (FAIY…CGVL).

Belongs to the UppP family.

The protein localises to the cell membrane. It catalyses the reaction di-trans,octa-cis-undecaprenyl diphosphate + H2O = di-trans,octa-cis-undecaprenyl phosphate + phosphate + H(+). Catalyzes the dephosphorylation of undecaprenyl diphosphate (UPP). Confers resistance to bacitracin. This chain is Undecaprenyl-diphosphatase, found in Bifidobacterium animalis subsp. lactis (strain AD011).